Here is a 192-residue protein sequence, read N- to C-terminus: Pyridoxal 5'-phosphate synthase subunit PdxT (192 aa).

47-49 (GES) lines the L-glutamine pocket. The Nucleophile role is filled by Cys-78. L-glutamine-binding positions include Arg-105 and 139-140 (IR). Catalysis depends on charge relay system residues His-175 and Glu-177.

Belongs to the glutaminase PdxT/SNO family. In terms of assembly, in the presence of PdxS, forms a dodecamer of heterodimers. Only shows activity in the heterodimer.

It carries out the reaction aldehydo-D-ribose 5-phosphate + D-glyceraldehyde 3-phosphate + L-glutamine = pyridoxal 5'-phosphate + L-glutamate + phosphate + 3 H2O + H(+). The catalysed reaction is L-glutamine + H2O = L-glutamate + NH4(+). Its pathway is cofactor biosynthesis; pyridoxal 5'-phosphate biosynthesis. Catalyzes the hydrolysis of glutamine to glutamate and ammonia as part of the biosynthesis of pyridoxal 5'-phosphate. The resulting ammonia molecule is channeled to the active site of PdxS. This Solibacter usitatus (strain Ellin6076) protein is Pyridoxal 5'-phosphate synthase subunit PdxT.